Consider the following 340-residue polypeptide: Uroporphyrinogen decarboxylase (340 aa).

Residues 21-25, Phe40, Asp71, Tyr148, Ser203, and His316 contribute to the substrate site; that span reads RQAGR.

Belongs to the uroporphyrinogen decarboxylase family. In terms of assembly, homodimer.

It is found in the cytoplasm. It catalyses the reaction uroporphyrinogen III + 4 H(+) = coproporphyrinogen III + 4 CO2. Its pathway is porphyrin-containing compound metabolism; protoporphyrin-IX biosynthesis; coproporphyrinogen-III from 5-aminolevulinate: step 4/4. Functionally, catalyzes the decarboxylation of four acetate groups of uroporphyrinogen-III to yield coproporphyrinogen-III. This is Uroporphyrinogen decarboxylase from Campylobacter jejuni subsp. jejuni serotype O:2 (strain ATCC 700819 / NCTC 11168).